Consider the following 298-residue polypeptide: Glycine--tRNA ligase alpha subunit (298 aa).

The protein belongs to the class-II aminoacyl-tRNA synthetase family. In terms of assembly, tetramer of two alpha and two beta subunits.

Its subcellular location is the cytoplasm. The catalysed reaction is tRNA(Gly) + glycine + ATP = glycyl-tRNA(Gly) + AMP + diphosphate. The chain is Glycine--tRNA ligase alpha subunit from Helicobacter pylori (strain P12).